The sequence spans 132 residues: Outer membrane protein RomA (132 aa).

The protein to M.tuberculosis Rv0906.

It localises to the cell outer membrane. The chain is Outer membrane protein RomA (romA) from Klebsiella pneumoniae.